Reading from the N-terminus, the 304-residue chain is Probable HTH-type transcriptional regulator LgoR (304 aa).

Residues 1–70 (MSRSQNLRHN…VGNDYVIARK (70 aa)) form the HTH gntR-type domain. The segment at residues 31–50 (QSALAEMYNISRTTVRHILS) is a DNA-binding region (H-T-H motif).

Its function is as follows. May be a positive transcriptional regulator for lgoD and/or lgoT. Is essential for growth on L-galactonate as the sole carbon source. The protein is Probable HTH-type transcriptional regulator LgoR (lgoR) of Escherichia coli (strain K12).